The following is a 139-amino-acid chain: D-ribose pyranase (139 aa).

His20 (proton donor) is an active-site residue. Substrate is bound by residues Asp28, His106, and 128-130 (YAN).

Belongs to the RbsD / FucU family. RbsD subfamily. Homodecamer.

Its subcellular location is the cytoplasm. The enzyme catalyses beta-D-ribopyranose = beta-D-ribofuranose. It functions in the pathway carbohydrate metabolism; D-ribose degradation; D-ribose 5-phosphate from beta-D-ribopyranose: step 1/2. Its function is as follows. Catalyzes the interconversion of beta-pyran and beta-furan forms of D-ribose. In Vibrio cholerae serotype O1 (strain ATCC 39541 / Classical Ogawa 395 / O395), this protein is D-ribose pyranase.